Consider the following 132-residue polypeptide: Small ribosomal subunit protein uS8 (132 aa).

The protein belongs to the universal ribosomal protein uS8 family. Part of the 30S ribosomal subunit. Contacts proteins S5 and S12.

In terms of biological role, one of the primary rRNA binding proteins, it binds directly to 16S rRNA central domain where it helps coordinate assembly of the platform of the 30S subunit. The protein is Small ribosomal subunit protein uS8 of Bartonella bacilliformis (strain ATCC 35685 / KC583 / Herrer 020/F12,63).